We begin with the raw amino-acid sequence, 147 residues long: Prefoldin subunit alpha 2 (147 aa).

It belongs to the prefoldin subunit alpha family. In terms of assembly, heterohexamer of two alpha and four beta subunits.

It is found in the cytoplasm. Functionally, molecular chaperone capable of stabilizing a range of proteins. Seems to fulfill an ATP-independent, HSP70-like function in archaeal de novo protein folding. The sequence is that of Prefoldin subunit alpha 2 (pfdA2) from Methanocaldococcus jannaschii (strain ATCC 43067 / DSM 2661 / JAL-1 / JCM 10045 / NBRC 100440) (Methanococcus jannaschii).